We begin with the raw amino-acid sequence, 320 residues long: Beta-carotene ketolase (320 aa).

The enzyme catalyses all-trans-beta-carotene + 2 AH2 + 2 O2 = echinenone + 2 A + 3 H2O. It carries out the reaction echinenone + 2 AH2 + 2 O2 = canthaxanthin + 2 A + 3 H2O. It functions in the pathway carotenoid biosynthesis; astaxanthin biosynthesis. Converts beta-carotene to canthaxanthin via echinenone. The chain is Beta-carotene ketolase from Haematococcus lacustris (Green alga).